Consider the following 317-residue polypeptide: uncharacterized protein (317 aa).

The region spanning 1 to 60 (MKHELSSMKAFVILAESSSFNNAAKLLNITQPALTRRIKKMEEDLHVQLFERTTRKVTLT) is the HTH lysR-type domain. Residues 20–40 (FNNAAKLLNITQPALTRRIKK) constitute a DNA-binding region (H-T-H motif).

This sequence belongs to the LysR transcriptional regulatory family.

This is an uncharacterized protein from Escherichia coli (strain K12).